Here is a 257-residue protein sequence, read N- to C-terminus: 3-deoxy-manno-octulosonate cytidylyltransferase (257 aa).

It belongs to the KdsB family.

It localises to the cytoplasm. It carries out the reaction 3-deoxy-alpha-D-manno-oct-2-ulosonate + CTP = CMP-3-deoxy-beta-D-manno-octulosonate + diphosphate. It participates in nucleotide-sugar biosynthesis; CMP-3-deoxy-D-manno-octulosonate biosynthesis; CMP-3-deoxy-D-manno-octulosonate from 3-deoxy-D-manno-octulosonate and CTP: step 1/1. Its pathway is bacterial outer membrane biogenesis; lipopolysaccharide biosynthesis. Functionally, activates KDO (a required 8-carbon sugar) for incorporation into bacterial lipopolysaccharide in Gram-negative bacteria. The polypeptide is 3-deoxy-manno-octulosonate cytidylyltransferase (Methylococcus capsulatus (strain ATCC 33009 / NCIMB 11132 / Bath)).